The sequence spans 967 residues: Aminopeptidase N (967 aa).

At 2–8 (AKGFYIS) the chain is on the cytoplasmic side. Residues 9 to 32 (KSLGILGILLGVAAVCTIIALSVV) form a helical; Signal-anchor for type II membrane protein membrane-spanning segment. The cytosolic Ser/Thr-rich junction stretch occupies residues 33 to 68 (YSQEKNKNANSSPVASTTPSASATTNPASATTLDQS). The Extracellular segment spans residues 33 to 967 (YSQEKNKNAN…VLQWFTENSK (935 aa)). The disordered stretch occupies residues 40–62 (NANSSPVASTTPSASATTNPASA). The span at 41 to 62 (ANSSPVASTTPSASATTNPASA) shows a compositional bias: low complexity. The interval 69–967 (KAWNRYRLPN…VLQWFTENSK (899 aa)) is metalloprotease. N128 carries N-linked (GlcNAc...) asparagine glycosylation. Y176 carries the post-translational modification Sulfotyrosine. N-linked (GlcNAc...) asparagine glycans are attached at residues N234 and N265. Residues 288 to 295 (DYVEKQAS) are necessary and sufficient to mediate interaction with HCoV-229E. The N-linked (GlcNAc...) asparagine glycan is linked to N319. Substrate is bound at residue 352 to 356 (GAMEN). H388 provides a ligand contact to Zn(2+). The Proton acceptor role is filled by E389. Zn(2+)-binding residues include H392 and E411. Sulfotyrosine is present on residues Y419 and Y424. N527, N573, N625, N681, and N735 each carry an N-linked (GlcNAc...) asparagine glycan. Cystine bridges form between C761/C768 and C798/C834. The N-linked (GlcNAc...) asparagine glycan is linked to N818. Y913 is subject to Sulfotyrosine.

Belongs to the peptidase M1 family. As to quaternary structure, homodimer. Interacts with SLC6A19. (Microbial infection) Interacts with the S1 domain of human coronavirus 229E/HCoV-229E spike protein. Zn(2+) serves as cofactor. Post-translationally, sulfated. N- and O-glycosylated. In terms of processing, may undergo proteolysis and give rise to a soluble form. In terms of tissue distribution, expressed in epithelial cells of the kidney, intestine, and respiratory tract; granulocytes, monocytes, fibroblasts, endothelial cells, cerebral pericytes at the blood-brain barrier, synaptic membranes of cells in the CNS. Also expressed in endometrial stromal cells, but not in the endometrial glandular cells. Found in the vasculature of tissues that undergo angiogenesis and in malignant gliomas and lymph node metastases from multiple tumor types but not in blood vessels of normal tissues. A soluble form has been found in plasma. It is found to be elevated in plasma and effusions of cancer patients.

It localises to the cell membrane. It carries out the reaction Release of an N-terminal amino acid, Xaa-|-Yaa- from a peptide, amide or arylamide. Xaa is preferably Ala, but may be most amino acids including Pro (slow action). When a terminal hydrophobic residue is followed by a prolyl residue, the two may be released as an intact Xaa-Pro dipeptide.. Functionally, broad specificity aminopeptidase which plays a role in the final digestion of peptides generated from hydrolysis of proteins by gastric and pancreatic proteases. Also involved in the processing of various peptides including peptide hormones, such as angiotensin III and IV, neuropeptides, and chemokines. May also be involved the cleavage of peptides bound to major histocompatibility complex class II molecules of antigen presenting cells. May have a role in angiogenesis and promote cholesterol crystallization. May have a role in amino acid transport by acting as binding partner of amino acid transporter SLC6A19 and regulating its activity. Its function is as follows. (Microbial infection) Acts as a receptor for human coronavirus 229E/HCoV-229E. In case of human coronavirus 229E (HCoV-229E) infection, serves as receptor for HCoV-229E spike glycoprotein. In terms of biological role, (Microbial infection) Mediates as well Human cytomegalovirus (HCMV) infection. In Homo sapiens (Human), this protein is Aminopeptidase N (ANPEP).